The following is a 620-amino-acid chain: E3 ubiquitin-protein ligase DTX1 (620 aa).

2 WWE domains span residues 14-94 (GLGF…PVRR) and 95-171 (NFYD…RLRR). Disordered regions lie at residues 221-248 (SQRR…LAVR), 262-313 (PAAG…SIPP), and 361-391 (PPVS…KSKN). Pro residues-rich tracts occupy residues 227–241 (PPAP…PGGP) and 268–280 (EPAP…PRSP). An SH3-binding motif is present at residues 230–233 (PPLP). Polar residues predominate over residues 291-307 (QNNLNRPGPQRTTSVSA). Positions 379 to 389 (RKTKKKHLKKS) are enriched in basic residues. Residues 411–472 (CTICMERLVT…DGSLQCPTCK (62 aa)) form an RING-type zinc finger.

It belongs to the Deltex family. As to quaternary structure, homodimer. May form a heterodimer with other members of the Deltex family. Interacts with NOTCH1 via its N-terminal region and EIF3F, the interaction is required for NOTCH1 deubiquitination. Interacts with EP300. Forms a heterodimer with BBAP; the heterodimerization leading to an increase of in vitro ubiquitin ligase activity. Interacts with ITCH. In terms of processing, ubiquitinated; undergoes 'Lys-29'-linked polyubiquitination catalyzed by ITCH. As to expression, widely expressed. Strongly expressed in blood vessel. Also expressed in embryonic nervous system, pancreas, lung, adrenal gland, digestive tube and muscles. Expressed in MZB cells and developing B- and T-cells.

The protein localises to the cytoplasm. It localises to the nucleus. The catalysed reaction is S-ubiquitinyl-[E2 ubiquitin-conjugating enzyme]-L-cysteine + [acceptor protein]-L-lysine = [E2 ubiquitin-conjugating enzyme]-L-cysteine + N(6)-ubiquitinyl-[acceptor protein]-L-lysine.. It functions in the pathway protein modification; protein ubiquitination. Functions as a ubiquitin ligase protein in vivo, mediating ubiquitination and promoting degradation of MEKK1, suggesting that it may regulate the Notch pathway via some ubiquitin ligase activity. Regulator of Notch signaling, a signaling pathway involved in cell-cell communications that regulates a broad spectrum of cell-fate determinations. Mainly acts as a positive regulator of Notch, but it also acts as a negative regulator, depending on the developmental and cell context. Mediates the antineural activity of Notch, possibly by inhibiting the transcriptional activation mediated by MATCH1. Involved in neurogenesis, lymphogenesis and myogenesis, and may also be involved in MZB (Marginal zone B) cell differentiation. Promotes B-cell development at the expense of T-cell development, suggesting that it can antagonize NOTCH1. The sequence is that of E3 ubiquitin-protein ligase DTX1 (DTX1) from Homo sapiens (Human).